The primary structure comprises 209 residues: Small ribosomal subunit protein uS4 (209 aa).

The S4 RNA-binding domain maps to 99-160; the sequence is ARLDSVAYRM…RARASLRCKA (62 aa).

Belongs to the universal ribosomal protein uS4 family. In terms of assembly, part of the 30S ribosomal subunit. Contacts protein S5. The interaction surface between S4 and S5 is involved in control of translational fidelity.

One of the primary rRNA binding proteins, it binds directly to 16S rRNA where it nucleates assembly of the body of the 30S subunit. In terms of biological role, with S5 and S12 plays an important role in translational accuracy. The chain is Small ribosomal subunit protein uS4 from Dechloromonas aromatica (strain RCB).